The sequence spans 649 residues: Threonine--tRNA ligase (649 aa).

One can recognise a TGS domain in the interval 1 to 66 (MVQITLPDGS…DNDAQLAIVT (66 aa)). Positions 247-538 (DHRKIGRELD…LIENHAGAMP (292 aa)) are catalytic. Zn(2+)-binding residues include C338, H389, and H515.

The protein belongs to the class-II aminoacyl-tRNA synthetase family. As to quaternary structure, homodimer. It depends on Zn(2+) as a cofactor.

Its subcellular location is the cytoplasm. It catalyses the reaction tRNA(Thr) + L-threonine + ATP = L-threonyl-tRNA(Thr) + AMP + diphosphate + H(+). Its function is as follows. Catalyzes the attachment of threonine to tRNA(Thr) in a two-step reaction: L-threonine is first activated by ATP to form Thr-AMP and then transferred to the acceptor end of tRNA(Thr). Also edits incorrectly charged L-seryl-tRNA(Thr). The polypeptide is Threonine--tRNA ligase (Bordetella bronchiseptica (strain ATCC BAA-588 / NCTC 13252 / RB50) (Alcaligenes bronchisepticus)).